The primary structure comprises 310 residues: GPN-loop GTPase 2 (310 aa).

Alanine 2 carries the post-translational modification N-acetylalanine. 19–24 (GSGKTT) provides a ligand contact to GTP. Residues 76–78 (GPN) carry the Gly-Pro-Asn (GPN)-loop; involved in dimer interface motif. 178–181 (SKMD) is a binding site for GTP.

It belongs to the GPN-loop GTPase family. As to quaternary structure, heterodimers with GPN1 or GPN3. Binds to RNA polymerase II (RNAPII).

In terms of biological role, small GTPase required for proper localization of RNA polymerase II and III (RNAPII and RNAPIII). May act at an RNAP assembly step prior to nuclear import. The protein is GPN-loop GTPase 2 (GPN2) of Bos taurus (Bovine).